A 139-amino-acid chain; its full sequence is MNPSSVFLIVVATVAICLIVIQVYYIYENYDNIKEFNSTHSLLEYSKTINVFSLDRRIYDPNDHVHDVKQKWRCVNYDNNYVSVSIFGFKSDSGKNIKNFSTVDDCIDYTFSKSTHSNIFNPCINEDKSKDCNFLKSVL.

A helical; Signal-anchor for type II membrane protein membrane pass occupies residues 1-21; that stretch reads MNPSSVFLIVVATVAICLIVI. Over 22–139 the chain is Virion surface; it reads QVYYIYENYD…KDCNFLKSVL (118 aa).

Belongs to the poxviridae A28 protein family. Contains two intramolecular disulfide bonds. They are created by the viral disulfide bond formation pathway, a poxvirus-specific pathway that operates on the cytoplasmic side of the MV membranes.

It localises to the virion membrane. Its function is as follows. Envelope protein required for virus entry into host cell and for cell-cell fusion (syncytium formation). This is Envelope protein A28 homolog from Homo sapiens (Human).